The chain runs to 186 residues: Crossover junction endodeoxyribonuclease RuvC (186 aa).

Catalysis depends on residues Asp7, Glu73, and Asp145. Mg(2+) is bound by residues Asp7, Glu73, and Asp145.

This sequence belongs to the RuvC family. As to quaternary structure, homodimer which binds Holliday junction (HJ) DNA. The HJ becomes 2-fold symmetrical on binding to RuvC with unstacked arms; it has a different conformation from HJ DNA in complex with RuvA. In the full resolvosome a probable DNA-RuvA(4)-RuvB(12)-RuvC(2) complex forms which resolves the HJ. Mg(2+) is required as a cofactor.

The protein localises to the cytoplasm. It carries out the reaction Endonucleolytic cleavage at a junction such as a reciprocal single-stranded crossover between two homologous DNA duplexes (Holliday junction).. In terms of biological role, the RuvA-RuvB-RuvC complex processes Holliday junction (HJ) DNA during genetic recombination and DNA repair. Endonuclease that resolves HJ intermediates. Cleaves cruciform DNA by making single-stranded nicks across the HJ at symmetrical positions within the homologous arms, yielding a 5'-phosphate and a 3'-hydroxyl group; requires a central core of homology in the junction. The consensus cleavage sequence is 5'-(A/T)TT(C/G)-3'. Cleavage occurs on the 3'-side of the TT dinucleotide at the point of strand exchange. HJ branch migration catalyzed by RuvA-RuvB allows RuvC to scan DNA until it finds its consensus sequence, where it cleaves and resolves the cruciform DNA. The protein is Crossover junction endodeoxyribonuclease RuvC of Acidovorax sp. (strain JS42).